Here is a 546-residue protein sequence, read N- to C-terminus: Immunoglobulin-like domain-containing receptor 1 (546 aa).

A signal peptide spans 1–23 (MAWPKLPAPWLLLCTWLPAGCLS). One can recognise an Ig-like V-type domain in the interval 24-162 (LLVTVQHTER…TSGDPDKEVK (139 aa)). The Extracellular portion of the chain corresponds to 24 to 167 (LLVTVQHTER…DKEVKLIVLH (144 aa)). Cys-45 and Cys-145 are oxidised to a cystine. The helical transmembrane segment at 168–188 (WLTVIFIILGALLLLLLIGVC) threads the bilayer. Over 189–546 (WCQCCPQYCC…SSHSGRSVVI (358 aa)) the chain is Cytoplasmic. The interval 399–546 (WSGRHRSSRL…SSHSGRSVVI (148 aa)) is disordered. The segment covering 442-457 (RCQERPRRPSPRESTQ) has biased composition (basic and acidic residues). Over residues 458–467 (RHGRRRRHRS) the composition is skewed to basic residues. Phosphoserine occurs at positions 499 and 501. Over residues 527 to 539 (GSVERRSEKDSSH) the composition is skewed to basic and acidic residues.

The protein belongs to the immunoglobulin superfamily. LISCH7 family. As to quaternary structure, homooligomer. Interacts with MARVELD2 and OCLN; the interaction is required to recruit MARVELD2 to tricellular contacts. Interacts (via C-terminus) with TRA2A, TRA2B and SRSF1. Interacts with PLSCR1.

Its subcellular location is the cell membrane. The protein resides in the cell junction. It is found in the tight junction. The protein localises to the nucleus. It localises to the cytoplasm. In terms of biological role, maintains epithelial barrier function by recruiting MARVELD2/tricellulin to tricellular tight junctions (tTJs). Crucial for normal hearing by maintaining the structural and functional integrity of tTJs, which are critical for the survival of auditory neurosensory HCs. Mediates fatty acids and lipoproteins-stimulated CCK/cholecystokinin secretion in the small intestine. In the inner ear, may regulate alternative pre-mRNA splicing via binding to TRA2A, TRA2B and SRSF1. The sequence is that of Immunoglobulin-like domain-containing receptor 1 (ILDR1) from Pongo abelii (Sumatran orangutan).